A 279-amino-acid chain; its full sequence is HTH-type transcriptional regulator HdfR (279 aa).

Positions Met-1–Thr-58 constitute an HTH lysR-type domain. The H-T-H motif DNA-binding region spans Phe-18–Arg-37.

It belongs to the LysR transcriptional regulatory family.

Functionally, negatively regulates the transcription of the flagellar master operon flhDC by binding to the upstream region of the operon. The polypeptide is HTH-type transcriptional regulator HdfR (Escherichia coli O17:K52:H18 (strain UMN026 / ExPEC)).